The primary structure comprises 777 residues: MAGPARFPLTFEDVAIYFSEQEWQHLEAWQKELYKQVMRTNYETLISLDNGLPKPELISWIELGRELFGSWGEKKKPDKETHCSIDDVHVHLAIEEQLLESSQRAVKSEVTCHSQLNPLESRHSFGLAVGERVDASLRHDQGISLVNAQTRCGEAVVSVVHSSSEAAQRKVLSSHRTLALPGLQRVSSWQSTQNSCPVCRENSWEKNHLVKQQKGHSKSRSYRVWKKFSRQADAKQPWSISCLGCGKSFRLKQYLVRHLDIHTRKRPPQCPKCKMCFHHERTLFSHHLKNSSSQHPTCDTSFRTDSSVDLCQQIQERPAFWREDTNVPSRQKPGPSLDCEDCCHMGSKLKGLQCGCILGEDRPHSHTEYGNCFLSQSKQAGLCRTHTGEKASQCPESNKRLCLRGLQNVHQHGLRGEKPVFCRKCGQGFTKHCGLTEHTRILSGEKSFWCAQCGRNFSQKGQLLRHQRLHLEEKPFQCTMCELRFHLKSRLRAHQLQHGGERPFSCSECGRAFTHQCKLREHLRVHSGERPFQCPECHKSFRLKGVLKAHQRIHSKERPFSCGECGKGFIRQSKLTEHFRVHSGERPFQCPECDRRFRLKGQLLSHQRLHTGERPFQCPECGKSYRVKADMKAHQLLHGGQMPFSCQCGKGFAKQSKLVEHMRTHTGEKPFQCPKCDKSFRLKAQLLSHQGLHTGERPFHCPECDKNFREKGHMLRHQRIHRPERPFACGDCGKGFIYKSKLAEHIRVHTKACQVPREPDIKKRLSQLFAMIEADWS.

One can recognise a KRAB domain in the interval 9–80 (LTFEDVAIYF…WGEKKKPDKE (72 aa)). The segment at 194–216 (NSCPVCRENSWEKNHLVKQQKGH) adopts a C2H2-type 1; degenerate zinc-finger fold. A C2H2-type 2 zinc finger spans residues 240–262 (ISCLGCGKSFRLKQYLVRHLDIH). The segment at 268–291 (PQCPKCKMCFHHERTLFSHHLKNS) adopts a C2H2-type 3; degenerate zinc-finger fold. The C2H2-type 4; degenerate zinc finger occupies 420–442 (VFCRKCGQGFTKHCGLTEHTRIL). 11 C2H2-type zinc fingers span residues 448–470 (FWCA…QRLH), 476–498 (FQCT…QLQH), 504–526 (FSCS…LRVH), 532–554 (FQCP…QRIH), 560–582 (FSCG…FRVH), 588–610 (FQCP…QRLH), 616–638 (FQCP…QLLH), 644–665 (FSCQ…MRTH), 671–693 (FQCP…QGLH), 699–721 (FHCP…QRIH), and 727–749 (FACG…IRVH).

This sequence belongs to the krueppel C2H2-type zinc-finger protein family.

It localises to the nucleus. May be involved in transcriptional regulation. This chain is Zinc finger protein 786 (Znf786), found in Mus musculus (Mouse).